A 377-amino-acid polypeptide reads, in one-letter code: F-box protein At2g05970 (377 aa).

The 48-residue stretch at 8-55 (ASWSELCPDVLRCVFELLSFSDLNRTRSVCSSWHSASRHCVPTQNQIP) folds into the F-box domain.

This Arabidopsis thaliana (Mouse-ear cress) protein is F-box protein At2g05970.